We begin with the raw amino-acid sequence, 273 residues long: Phosphonates import ATP-binding protein PhnC (273 aa).

Residues Leu-2–Ala-245 enclose the ABC transporter domain. An ATP-binding site is contributed by Gly-34–Ser-41.

It belongs to the ABC transporter superfamily. Phosphonates importer (TC 3.A.1.9.1) family. In terms of assembly, the complex is composed of two ATP-binding proteins (PhnC), two transmembrane proteins (PhnE) and a solute-binding protein (PhnD).

It is found in the cell inner membrane. The enzyme catalyses phosphonate(out) + ATP + H2O = phosphonate(in) + ADP + phosphate + H(+). Functionally, part of the ABC transporter complex PhnCDE involved in phosphonates import. Responsible for energy coupling to the transport system. The chain is Phosphonates import ATP-binding protein PhnC from Ruegeria pomeroyi (strain ATCC 700808 / DSM 15171 / DSS-3) (Silicibacter pomeroyi).